The chain runs to 84 residues: Sulfur carrier protein TusA (84 aa).

The active-site Cysteine persulfide intermediate is the cysteine 19.

This sequence belongs to the sulfur carrier protein TusA family. As to quaternary structure, interacts with IscS.

It is found in the cytoplasm. It functions in the pathway tRNA modification. Its function is as follows. Sulfur carrier protein involved in sulfur trafficking in the cell. Part of a sulfur-relay system required for 2-thiolation during synthesis of 2-thiouridine of the modified wobble base 5-methylaminomethyl-2-thiouridine (mnm(5)s(2)U) in tRNA. Interacts with IscS and stimulates its cysteine desulfurase activity. Accepts an activated sulfur from IscS, which is then transferred to TusD, and thus determines the direction of sulfur flow from IscS to 2-thiouridine formation. Also appears to be involved in sulfur transfer for the biosynthesis of molybdopterin. The chain is Sulfur carrier protein TusA from Photorhabdus laumondii subsp. laumondii (strain DSM 15139 / CIP 105565 / TT01) (Photorhabdus luminescens subsp. laumondii).